A 98-amino-acid chain; its full sequence is MASINRTIEIMKKHGVSKQHLLEEINKKRESNCLVERSNQVSLLRVQKRHFPDAYQSFTDTTTKEPVPNSGRSSWIKLSLLAHMERKHFPPKNNAIFG.

The protein belongs to the SPATA45 family.

This chain is Spermatogenesis-associated protein 45 (SPATA45), found in Homo sapiens (Human).